The sequence spans 464 residues: ATP synthase subunit beta (464 aa).

153–160 provides a ligand contact to ATP; sequence GGAGVGKT.

This sequence belongs to the ATPase alpha/beta chains family. F-type ATPases have 2 components, CF(1) - the catalytic core - and CF(0) - the membrane proton channel. CF(1) has five subunits: alpha(3), beta(3), gamma(1), delta(1), epsilon(1). CF(0) has three main subunits: a(1), b(2) and c(9-12). The alpha and beta chains form an alternating ring which encloses part of the gamma chain. CF(1) is attached to CF(0) by a central stalk formed by the gamma and epsilon chains, while a peripheral stalk is formed by the delta and b chains.

Its subcellular location is the cell membrane. It catalyses the reaction ATP + H2O + 4 H(+)(in) = ADP + phosphate + 5 H(+)(out). In terms of biological role, produces ATP from ADP in the presence of a proton gradient across the membrane. The catalytic sites are hosted primarily by the beta subunits. The polypeptide is ATP synthase subunit beta (Alkaliphilus oremlandii (strain OhILAs) (Clostridium oremlandii (strain OhILAs))).